We begin with the raw amino-acid sequence, 159 residues long: Transcriptional repressor NrdR (159 aa).

Residues 3 to 34 (CPFCRHDDTQVVDSRVSEDGAAIRRRRRCSAC) fold into a zinc finger. Residues 49-139 (PFVVKKDGSR…VYRRFEDVSE (91 aa)) enclose the ATP-cone domain.

This sequence belongs to the NrdR family. Zn(2+) is required as a cofactor.

Functionally, negatively regulates transcription of bacterial ribonucleotide reductase nrd genes and operons by binding to NrdR-boxes. The chain is Transcriptional repressor NrdR from Burkholderia cenocepacia (strain ATCC BAA-245 / DSM 16553 / LMG 16656 / NCTC 13227 / J2315 / CF5610) (Burkholderia cepacia (strain J2315)).